The primary structure comprises 222 residues: Superoxide dismutase [Mn], mitochondrial (222 aa).

A mitochondrion-targeting transit peptide spans 1-24; sequence MLSRAVCGTGRQLAPALGYLGSRQ. His50 is a binding site for Mn(2+). Tyr58 carries the post-translational modification 3'-nitrotyrosine. 2 positions are modified to N6-acetyllysine; alternate: Lys68 and Lys75. N6-succinyllysine; alternate occurs at positions 68 and 75. His98 contributes to the Mn(2+) binding site. Lys114 is modified (N6-acetyllysine). 2 positions are modified to N6-acetyllysine; alternate: Lys122 and Lys130. 2 positions are modified to N6-succinyllysine; alternate: Lys122 and Lys130. Residues Asp183 and His187 each coordinate Mn(2+). Lys202 is subject to N6-acetyllysine.

It belongs to the iron/manganese superoxide dismutase family. In terms of assembly, homotetramer. The cofactor is Mn(2+). In terms of processing, nitrated under oxidative stress. Nitration coupled with oxidation inhibits the catalytic activity. Post-translationally, acetylation at Lys-122 decreases enzymatic activity. Deacetylated by SIRT3 upon exposure to ionizing radiations or after long fasting. Polyubiquitinated; leading to proteasomal degradation. Deubiquitinated by USP36 which increases protein stability.

It is found in the mitochondrion matrix. It carries out the reaction 2 superoxide + 2 H(+) = H2O2 + O2. In terms of biological role, destroys superoxide anion radicals which are normally produced within the cells and which are toxic to biological systems. The sequence is that of Superoxide dismutase [Mn], mitochondrial (SOD2) from Macaca fascicularis (Crab-eating macaque).